Consider the following 369-residue polypeptide: MKNHKSLAILIPMLFAGSTAVNAIEIFNKNGNKLELYGSINPNHNFSNEFLSTKISSKEDNTNAILGLSGKIKITDKLSSYAQIEYKNNFFMPEDLMNKQQPNTVRLGYAGLKYGNLGSIDYGRNYGVIHDAQSLTDHVPYINKKSIFAYNDNYMVGRNHSLLTYRNNNVFGLVDGISFALQYQDEIKNRDLNKGKSSSGWGASLKYESDSGLTAVGSCFTSERMISSNKKDLKNTSVDSYGLGFKYDANNVYVAAFYGSARNLMPYNMHISDSFINETQNIEAIAEYSFDSGFHPSLSYLDSKGQNSNSPKKELDLAKQINISTRYEFNKNVSTYMNYKINLLKENDFISQNQIPTDNTIGAGVVYQF.

A signal peptide spans Met-1 to Ala-23.

Belongs to the Gram-negative porin family. Homotrimer.

The protein resides in the cell outer membrane. In terms of biological role, forms pores that allow passive diffusion of small molecules across the membrane. This is Porin-like protein BUsg_347 from Buchnera aphidicola subsp. Schizaphis graminum (strain Sg).